The chain runs to 514 residues: 2,3-bisphosphoglycerate-independent phosphoglycerate mutase (514 aa).

Mn(2+)-binding residues include Asp-13 and Ser-63. Ser-63 functions as the Phosphoserine intermediate in the catalytic mechanism. Residues His-124, 154–155 (RD), Arg-186, Arg-192, 258–261 (RADR), and Lys-332 contribute to the substrate site. Residues Asp-399, His-403, Asp-440, His-441, and His-459 each contribute to the Mn(2+) site.

Belongs to the BPG-independent phosphoglycerate mutase family. In terms of assembly, monomer. Mn(2+) serves as cofactor.

The catalysed reaction is (2R)-2-phosphoglycerate = (2R)-3-phosphoglycerate. Its pathway is carbohydrate degradation; glycolysis; pyruvate from D-glyceraldehyde 3-phosphate: step 3/5. Catalyzes the interconversion of 2-phosphoglycerate and 3-phosphoglycerate. This is 2,3-bisphosphoglycerate-independent phosphoglycerate mutase from Legionella pneumophila (strain Lens).